Here is a 294-residue protein sequence, read N- to C-terminus: GTPase Era (294 aa).

Residues 2–171 (NSGVVTIIGR…LSLLIELLPE (170 aa)) enclose the Era-type G domain. The segment at 10 to 17 (GRPSAGKS) is G1. GTP is bound at residue 10–17 (GRPSAGKS). The segment at 36 to 40 (QTTRN) is G2. The G3 stretch occupies residues 57 to 60 (DTPG). Residues 57–61 (DTPGY) and 119–122 (NKAD) contribute to the GTP site. Positions 119-122 (NKAD) are G4. The tract at residues 150-152 (ISA) is G5. In terms of domain architecture, KH type-2 spans 202 to 280 (TREEIPHALY…QLDLQVRVNK (79 aa)).

This sequence belongs to the TRAFAC class TrmE-Era-EngA-EngB-Septin-like GTPase superfamily. Era GTPase family. In terms of assembly, monomer.

The protein resides in the cytoplasm. It is found in the cell inner membrane. An essential GTPase that binds both GDP and GTP, with rapid nucleotide exchange. Plays a role in 16S rRNA processing and 30S ribosomal subunit biogenesis and possibly also in cell cycle regulation and energy metabolism. The chain is GTPase Era from Treponema denticola (strain ATCC 35405 / DSM 14222 / CIP 103919 / JCM 8153 / KCTC 15104).